The chain runs to 300 residues: MKIAILSRDGTLYSCKRLREAAIQRGHLVEILDPLSCYMNINPAASSIYYKGRKLPHFDAVIPRIGTAITFYGTAALRQFEMLGSYPLNESVAIARARDKLRSMQLLARQGIDLPVTGIAHSPDDTSDLIDMVGGAPLVVKLVEGTQGIGVVLAETRQAAESVIDAFRGLNAHILVQEYIKEAQGCDIRCLVVGDEVVAAIERRAKEGYFRSNLHRGGAASVASITPQEREIAIKAARTMALDVAGVDILRANRGPLVMEVNASPGLEGIEKTTGIDIAGKMIRWIERHATTEYCLKTGG.

The ATP-grasp domain occupies 104 to 287; that stretch reads MQLLARQGID…IAGKMIRWIE (184 aa). Residues K141, 178-179, D187, and 211-213 each bind ATP; these read EY and RSN. The Mg(2+) site is built by D248, E260, and N262. D248, E260, and N262 together coordinate Mn(2+).

It belongs to the RimK family. Mg(2+) serves as cofactor. It depends on Mn(2+) as a cofactor.

An L-glutamate ligase that catalyzes the ATP-dependent post-translational addition of glutamate residues to the C-terminus of ribosomal protein bS6 (RpsF). Is also able to catalyze the synthesis of poly-alpha-glutamate in vitro, via ATP hydrolysis from unprotected glutamate as substrate. The number of glutamate residues added to either RpsF or to poly-alpha-glutamate changes with pH. The polypeptide is Ribosomal protein bS6--L-glutamate ligase (Shigella flexneri serotype 5b (strain 8401)).